We begin with the raw amino-acid sequence, 649 residues long: Protein translocase subunit SecA 2 (649 aa).

ATP-binding positions include Q105, 123–127 (GEGKT), and D535.

It belongs to the SecA family. As to quaternary structure, monomer and homodimer. Part of the essential Sec protein translocation apparatus which comprises SecA, SecYEG and auxiliary proteins SecDF-YajC and YidC.

The protein resides in the cell inner membrane. Its subcellular location is the cytoplasm. The catalysed reaction is ATP + H2O + cellular proteinSide 1 = ADP + phosphate + cellular proteinSide 2.. In terms of biological role, part of the Sec protein translocase complex. Interacts with the SecYEG preprotein conducting channel. Has a central role in coupling the hydrolysis of ATP to the transfer of proteins into and across the cell membrane, serving both as a receptor for the preprotein-SecB complex and as an ATP-driven molecular motor driving the stepwise translocation of polypeptide chains across the membrane. This chain is Protein translocase subunit SecA 2, found in Magnetococcus marinus (strain ATCC BAA-1437 / JCM 17883 / MC-1).